The sequence spans 351 residues: Uroporphyrinogen decarboxylase (351 aa).

Substrate is bound by residues 26 to 30 (RQAGR), aspartate 75, tyrosine 151, serine 206, and histidine 321.

Belongs to the uroporphyrinogen decarboxylase family. Homodimer.

The protein resides in the cytoplasm. It catalyses the reaction uroporphyrinogen III + 4 H(+) = coproporphyrinogen III + 4 CO2. It participates in porphyrin-containing compound metabolism; protoporphyrin-IX biosynthesis; coproporphyrinogen-III from 5-aminolevulinate: step 4/4. Its function is as follows. Catalyzes the decarboxylation of four acetate groups of uroporphyrinogen-III to yield coproporphyrinogen-III. The protein is Uroporphyrinogen decarboxylase of Koribacter versatilis (strain Ellin345).